We begin with the raw amino-acid sequence, 518 residues long: Arrestin-related trafficking adapter 10 (518 aa).

A Glycyl lysine isopeptide (Lys-Gly) (interchain with G-Cter in ubiquitin) cross-link involves residue lysine 118.

The protein belongs to the ART10 family. Interacts with RSP5. Post-translationally, ubiquitinated by RSP5.

Its subcellular location is the cytoplasm. In terms of biological role, may regulate endocytosis by recruiting RSP5 ubiquitin ligase activity to specific plasma membrane proteins in response to extracellular stimuli. The chain is Arrestin-related trafficking adapter 10 (ART10) from Saccharomyces cerevisiae (strain YJM789) (Baker's yeast).